We begin with the raw amino-acid sequence, 549 residues long: Dihydroxy-acid dehydratase (549 aa).

Asp-78 is a binding site for Mg(2+). A [2Fe-2S] cluster-binding site is contributed by Cys-119. Residues Asp-120 and Lys-121 each contribute to the Mg(2+) site. At Lys-121 the chain carries N6-carboxylysine. Cys-191 lines the [2Fe-2S] cluster pocket. A Mg(2+)-binding site is contributed by Glu-441. Ser-466 functions as the Proton acceptor in the catalytic mechanism.

This sequence belongs to the IlvD/Edd family. Homodimer. [2Fe-2S] cluster serves as cofactor. Requires Mg(2+) as cofactor.

It catalyses the reaction (2R)-2,3-dihydroxy-3-methylbutanoate = 3-methyl-2-oxobutanoate + H2O. The catalysed reaction is (2R,3R)-2,3-dihydroxy-3-methylpentanoate = (S)-3-methyl-2-oxopentanoate + H2O. The protein operates within amino-acid biosynthesis; L-isoleucine biosynthesis; L-isoleucine from 2-oxobutanoate: step 3/4. It functions in the pathway amino-acid biosynthesis; L-valine biosynthesis; L-valine from pyruvate: step 3/4. Functionally, functions in the biosynthesis of branched-chain amino acids. Catalyzes the dehydration of (2R,3R)-2,3-dihydroxy-3-methylpentanoate (2,3-dihydroxy-3-methylvalerate) into 2-oxo-3-methylpentanoate (2-oxo-3-methylvalerate) and of (2R)-2,3-dihydroxy-3-methylbutanoate (2,3-dihydroxyisovalerate) into 2-oxo-3-methylbutanoate (2-oxoisovalerate), the penultimate precursor to L-isoleucine and L-valine, respectively. In Methanothermobacter thermautotrophicus (strain ATCC 29096 / DSM 1053 / JCM 10044 / NBRC 100330 / Delta H) (Methanobacterium thermoautotrophicum), this protein is Dihydroxy-acid dehydratase.